A 151-amino-acid chain; its full sequence is Transcriptional repressor NrdR (151 aa).

A zinc finger spans residues 3 to 34; it reads CPFCNAQDTKVIDSRLVSEGSQVRRRRSCNEC. An ATP-cone domain is found at 49 to 139; sequence PRLIKSDGRR…VYRSFKDVKE (91 aa).

It belongs to the NrdR family. Requires Zn(2+) as cofactor.

Its function is as follows. Negatively regulates transcription of bacterial ribonucleotide reductase nrd genes and operons by binding to NrdR-boxes. This Psychromonas ingrahamii (strain DSM 17664 / CCUG 51855 / 37) protein is Transcriptional repressor NrdR.